Here is a 90-residue protein sequence, read N- to C-terminus: UPF0297 protein OEOE_1166 (90 aa).

It belongs to the UPF0297 family.

This chain is UPF0297 protein OEOE_1166, found in Oenococcus oeni (strain ATCC BAA-331 / PSU-1).